The sequence spans 130 residues: Large ribosomal subunit protein bL19 (130 aa).

It belongs to the bacterial ribosomal protein bL19 family.

Functionally, this protein is located at the 30S-50S ribosomal subunit interface and may play a role in the structure and function of the aminoacyl-tRNA binding site. This is Large ribosomal subunit protein bL19 from Methylorubrum populi (strain ATCC BAA-705 / NCIMB 13946 / BJ001) (Methylobacterium populi).